The chain runs to 336 residues: tRNA (guanine(10)-N2)-dimethyltransferase (336 aa).

Residues 50–147 (KILKKRLAYA…NDRFILTRRL (98 aa)) enclose the THUMP domain.

It belongs to the methyltransferase superfamily. Trm-G10 family. Monomer.

It localises to the cytoplasm. The enzyme catalyses guanosine(10) in tRNA + 2 S-adenosyl-L-methionine = N(2)-dimethylguanosine(10) in tRNA + 2 S-adenosyl-L-homocysteine + 2 H(+). Catalyzes the adenosylmethionine-dependent methylation of the exocyclic amino group (N(2)) of guanosine at position 10 of various tRNAs. Acts via a two-step process that leads to the formation of either N(2)-monomethyl (m(2)G) or N(2)-dimethylguanosine (m(2)(2)G). The polypeptide is tRNA (guanine(10)-N2)-dimethyltransferase (trmG10) (Methanothermobacter thermautotrophicus (strain ATCC 29096 / DSM 1053 / JCM 10044 / NBRC 100330 / Delta H) (Methanobacterium thermoautotrophicum)).